The sequence spans 152 residues: Small ribosomal subunit protein uS13z/uS13y/uS13x (152 aa).

Serine 2 carries the post-translational modification N-acetylserine.

The protein belongs to the universal ribosomal protein uS13 family.

The protein localises to the cytoplasm. Functionally, located at the top of the head of the 40S subunit, it contacts several helices of the 18S rRNA. The sequence is that of Small ribosomal subunit protein uS13z/uS13y/uS13x (RPS18A) from Arabidopsis thaliana (Mouse-ear cress).